Consider the following 206-residue polypeptide: Carbonic anhydrase (206 aa).

Residue K11 forms an Isoglutamyl lysine isopeptide (Lys-Gln) (interchain with Q-Cter in protein Pup) linkage. Zn(2+) is bound by residues C51, D53, H104, and C107.

The protein belongs to the beta-class carbonic anhydrase family. In terms of assembly, homotetramer. Zn(2+) is required as a cofactor.

It catalyses the reaction hydrogencarbonate + H(+) = CO2 + H2O. Its function is as follows. Catalyzes the reversible hydration of carbon dioxide to form bicarbonate. The protein is Carbonic anhydrase (cynT) of Mycolicibacterium smegmatis (strain ATCC 700084 / mc(2)155) (Mycobacterium smegmatis).